A 90-amino-acid polypeptide reads, in one-letter code: UPF0223 protein lmo1058 (90 aa).

Belongs to the UPF0223 family.

The chain is UPF0223 protein lmo1058 from Listeria monocytogenes serovar 1/2a (strain ATCC BAA-679 / EGD-e).